A 449-amino-acid polypeptide reads, in one-letter code: Biotin carboxylase (449 aa).

The Biotin carboxylation domain maps to 1–445 (MLDKIVIANR…NIHYLEKKLG (445 aa)). ATP-binding positions include lysine 116, lysine 159, 165–166 (GG), 201–204 (EKYL), histidine 209, and histidine 236. The 198-residue stretch at 120–317 (IAAMKKAGVP…LIKEQLRIAA (198 aa)) folds into the ATP-grasp domain. Hydrogencarbonate is bound at residue lysine 238. ATP is bound by residues glutamate 276 and glutamate 288. Glutamate 276, glutamate 288, and asparagine 290 together coordinate Mg(2+). The Mn(2+) site is built by glutamate 276, glutamate 288, and asparagine 290. Positions 292, 295, and 338 each coordinate hydrogencarbonate. Residue arginine 292 is part of the active site. Arginine 338 is a binding site for biotin.

Acetyl-CoA carboxylase is a heterohexamer of biotin carboxyl carrier protein, biotin carboxylase and the two subunits of carboxyl transferase in a 2:2 complex. Mg(2+) serves as cofactor. Requires Mn(2+) as cofactor.

It catalyses the reaction N(6)-biotinyl-L-lysyl-[protein] + hydrogencarbonate + ATP = N(6)-carboxybiotinyl-L-lysyl-[protein] + ADP + phosphate + H(+). It functions in the pathway lipid metabolism; malonyl-CoA biosynthesis; malonyl-CoA from acetyl-CoA: step 1/1. Functionally, this protein is a component of the acetyl coenzyme A carboxylase complex; first, biotin carboxylase catalyzes the carboxylation of the carrier protein and then the transcarboxylase transfers the carboxyl group to form malonyl-CoA. The chain is Biotin carboxylase (accC) from Escherichia coli (strain K12).